Reading from the N-terminus, the 577-residue chain is Cleavage stimulation factor subunit 2 (577 aa).

Ser-14 carries the phosphoserine modification. The 79-residue stretch at 16 to 94 (RSVFVGNIPY…RALRVDNAAS (79 aa)) folds into the RRM domain. Residues 108–248 (APVIESPYGE…VNGAPPLMQA (141 aa)) are interactions with CSTF3 and SYMPK. Lys-189 is covalently cross-linked (Glycyl lysine isopeptide (Lys-Gly) (interchain with G-Cter in SUMO2)). Residues 206–243 (QPVHGAGPGSGSNVSMNQQNPQAPQAQSLGGMHVNGAP) form a disordered region. Over residues 222–232 (NQQNPQAPQAQ) the composition is skewed to low complexity. Arg-308 bears the Omega-N-methylarginine mark. The disordered stretch occupies residues 340-409 (EVEPRGYLGP…DGRGGRDPRG (70 aa)). Residues 360–373 (PGHESRGPPPHELR) show a composition bias toward basic and acidic residues. The stretch at 410 to 414 (IDARG) is one 1; approximate repeat. The interval 410-469 (IDARGMEARAMEARGLDARGLEARAMEARAMEARAMEARAMEARAMEVRGMEARGMDTRG) is 12 X 5 AA tandem repeats of M-E-A-R-[AG]. 2 consecutive repeat copies span residues 415–419 (MEARA) and 420–424 (MEARG). A 4; approximate repeat occupies 425–429 (LDARG). One copy of the 5; approximate repeat lies at 430 to 434 (LEARA). A run of 4 repeats spans residues 435–439 (MEARA), 440–444 (MEARA), 445–449 (MEARA), and 450–454 (MEARA). One copy of the 10; approximate repeat lies at 455–459 (MEVRG). Copy 11 of the repeat occupies 460–464 (MEARG). Residues 465 to 469 (MDTRG) form a 12; approximate repeat. Arg-468 and Arg-475 each carry omega-N-methylarginine. The tract at residues 508–532 (GMQGASIQGGSQPGGFSPGQNQVTP) is disordered. Positions 514 to 577 (IQGGSQPGGF…EQIQKSTGAP (64 aa)) are interaction with RPO2TC1. A phosphoserine mark is found at Ser-518 and Ser-524.

The CSTF complex is composed of CSTF1 (50 kDa subunit), CSTF2 (64 kDa subunit) and CSTF3 (77 kDa subunit). CSTF2 directly interacts with CSTF3, SYMPK and RPO2TC1. Interacts with HSF1 in heat-stressed cells. Interacts with CPSF2, CPSF3 and FIP1L1. Interacts with DDX1.

The protein resides in the nucleus. Its function is as follows. One of the multiple factors required for polyadenylation and 3'-end cleavage of mammalian pre-mRNAs. This subunit is directly involved in the binding to pre-mRNAs. The protein is Cleavage stimulation factor subunit 2 (CSTF2) of Homo sapiens (Human).